Here is a 259-residue protein sequence, read N- to C-terminus: DnaJ homolog subfamily C member 9 (259 aa).

Positions 15–82 (DLYQVLGVRR…EQKAVYDEQG (68 aa)) constitute a J domain. Ser109 carries the phosphoserine modification. Positions 171 to 248 (EIPAYSAFVK…EAKYCKPSKG (78 aa)) are required for histone binding.

In terms of assembly, forms a co-chaperone complex with MCM2 and histone H3.3-H4 dimers. Within the complex, interacts (via C-terminus) with MCM2 (via N-terminus); the interaction is histone-dependent. Within the complex, interacts (via C-terminus) with histone H3.3-H4 heterodimers; the interaction is direct. Interacts with histones H4, H3.3, H3.2 and H3.1, but not with CENPA or the testis-specific histone H3.1t. Interacts (via J domain) with HSPA1A, HSPA1B and HSPA8. May interact with TONSL; the interaction seems to be histone-dependent. May interact with HSPA8 and BAG2; the interactions seem to be histone-dependent.

It localises to the nucleus. The protein resides in the cytoplasm. It is found in the cell membrane. Its function is as follows. Acts as a dual histone chaperone and heat shock co-chaperone. As a histone chaperone, forms a co-chaperone complex with MCM2 and histone H3-H4 heterodimers; and may thereby assist MCM2 in histone H3-H4 heterodimer recognition and facilitate the assembly of histones into nucleosomes. May also act as a histone co-chaperone together with TONSL. May recruit histone chaperones ASF1A, NASP and SPT2 to histone H3-H4 heterodimers. Also plays a role as co-chaperone of the HSP70 family of molecular chaperone proteins, such as HSPA1A, HSPA1B and HSPA8. As a co-chaperone, may play a role in the recruitment of HSP70-type molecular chaperone machinery to histone H3-H4 substrates, thereby maintaining the histone structural integrity. Exhibits activity to assemble histones onto DNA in vitro. This chain is DnaJ homolog subfamily C member 9 (Dnajc9), found in Mus musculus (Mouse).